The primary structure comprises 335 residues: Ketol-acid reductoisomerase (NADP(+)) (335 aa).

The region spanning 1-182 is the KARI N-terminal Rossmann domain; that stretch reads MATIIYDDET…GATRAGVYET (182 aa). NADP(+)-binding positions include 25-28, Arg48, Ser51, Ser53, and 83-86; these read YGSQ and DEKQ. His108 is an active-site residue. Gly134 is a binding site for NADP(+). The region spanning 183–328 is the KARI C-terminal knotted domain; that stretch reads TFREETETDL…KQIRANIPWL (146 aa). Residues Asp191, Glu195, Glu227, and Glu231 each contribute to the Mg(2+) site. Position 252 (Ser252) interacts with substrate.

Belongs to the ketol-acid reductoisomerase family. Requires Mg(2+) as cofactor.

It catalyses the reaction (2R)-2,3-dihydroxy-3-methylbutanoate + NADP(+) = (2S)-2-acetolactate + NADPH + H(+). It carries out the reaction (2R,3R)-2,3-dihydroxy-3-methylpentanoate + NADP(+) = (S)-2-ethyl-2-hydroxy-3-oxobutanoate + NADPH + H(+). It functions in the pathway amino-acid biosynthesis; L-isoleucine biosynthesis; L-isoleucine from 2-oxobutanoate: step 2/4. The protein operates within amino-acid biosynthesis; L-valine biosynthesis; L-valine from pyruvate: step 2/4. In terms of biological role, involved in the biosynthesis of branched-chain amino acids (BCAA). Catalyzes an alkyl-migration followed by a ketol-acid reduction of (S)-2-acetolactate (S2AL) to yield (R)-2,3-dihydroxy-isovalerate. In the isomerase reaction, S2AL is rearranged via a Mg-dependent methyl migration to produce 3-hydroxy-3-methyl-2-ketobutyrate (HMKB). In the reductase reaction, this 2-ketoacid undergoes a metal-dependent reduction by NADPH to yield (R)-2,3-dihydroxy-isovalerate. The sequence is that of Ketol-acid reductoisomerase (NADP(+)) from Methanosarcina mazei (strain ATCC BAA-159 / DSM 3647 / Goe1 / Go1 / JCM 11833 / OCM 88) (Methanosarcina frisia).